The primary structure comprises 309 residues: Aspartate carbamoyltransferase catalytic subunit (309 aa).

Residues Arg-57 and Thr-58 each coordinate carbamoyl phosphate. Lys-86 lines the L-aspartate pocket. Residues Arg-107, His-135, and Gln-138 each coordinate carbamoyl phosphate. Residues Arg-168 and Arg-228 each contribute to the L-aspartate site. Residues Leu-267 and Pro-268 each contribute to the carbamoyl phosphate site.

Belongs to the aspartate/ornithine carbamoyltransferase superfamily. ATCase family. As to quaternary structure, heterooligomer of catalytic and regulatory chains.

The enzyme catalyses carbamoyl phosphate + L-aspartate = N-carbamoyl-L-aspartate + phosphate + H(+). Its pathway is pyrimidine metabolism; UMP biosynthesis via de novo pathway; (S)-dihydroorotate from bicarbonate: step 2/3. Its function is as follows. Catalyzes the condensation of carbamoyl phosphate and aspartate to form carbamoyl aspartate and inorganic phosphate, the committed step in the de novo pyrimidine nucleotide biosynthesis pathway. The sequence is that of Aspartate carbamoyltransferase catalytic subunit from Cenarchaeum symbiosum (strain A).